Reading from the N-terminus, the 435-residue chain is IAA-amino acid hydrolase ILR1-like 5 (435 aa).

Residues Met-1 to Ser-25 form the signal peptide. Mn(2+) contacts are provided by Cys-134, His-136, Glu-170, His-194, and His-397. Positions Lys-432 to Leu-435 match the Prevents secretion from ER motif.

The protein belongs to the peptidase M20 family.

Its subcellular location is the endoplasmic reticulum lumen. Hydrolyzes certain amino acid conjugates of the plant growth regulator indole-3-acetic acid (IAA). In Arabidopsis thaliana (Mouse-ear cress), this protein is IAA-amino acid hydrolase ILR1-like 5.